Consider the following 121-residue polypeptide: Natriuretic peptides B (121 aa).

An N-terminal signal peptide occupies residues Met1–Ser26. Cysteines 99 and 115 form a disulfide.

This sequence belongs to the natriuretic peptide family. In terms of processing, the precursor molecule is proteolytically cleaved by the endoprotease Furin to produce brain natriuretic peptide 45. May undergo further proteolytic cleavage by various proteases such as DPP4, MME and possibly FAP, to give rise to a variety of shorter peptides. May be cleaved at Ser-91 by the prolyl endopeptidase FAP (seprase) activity (in vitro). May be degraded by IDE. During IDE degradation, the resulting products initially increase the activation of NPR1 and can also stimulate NPR2 to produce cGMP before the fragments are completely degraded and inactivated by IDE (in vitro). Expressed in the atria and ventricles, but at much lower levels than NPPA. Expression levels in the ventricles are slightly higher than in the atria. Very low levels of expression detected in the brain, hypothalamus, lung and aorta. In terms of tissue distribution, atria (at protein level). Cardiocytes (at protein level).

It localises to the secreted. Functionally, cardiac hormone that plays a key role in mediating cardio-renal homeostasis. May also function as a paracrine antifibrotic factor in the heart. Acts by specifically binding and stimulating NPR1 to produce cGMP, which in turn activates effector proteins that drive various biological responses. Likely involved in regulating the extracellular fluid volume and maintaining the fluid-electrolyte balance through natriuresis, diuresis, kaluresis and chloruresis. This is Natriuretic peptides B (Nppb) from Rattus norvegicus (Rat).